The sequence spans 136 residues: Histone H3.3 type c (136 aa).

The segment at 1-30 (MARTKQTARKSTGAKVPRKHLSSKSSFPSK) is disordered. Lys-5 is modified (N6,N6,N6-trimethyllysine; by set1; alternate). Lys-5 is subject to N6,N6-dimethyllysine; by set1; alternate. An N6-acetyllysine; alternate mark is found at Lys-5 and Lys-10. Lys-5 is subject to N6-methyllysine; by set1; alternate. Position 10 is an N6,N6,N6-trimethyllysine; alternate (Lys-10). The residue at position 10 (Lys-10) is an N6,N6-dimethyllysine; alternate. N6-methyllysine; alternate is present on Lys-10. Ser-11 is modified (phosphoserine). At Lys-15 the chain carries N6-acetyllysine. Residues Lys-19, Lys-24, and Lys-37 each carry the N6-acetyllysine; alternate modification. N6-methyllysine; alternate occurs at positions 19, 24, and 37. Lys-37 bears the N6,N6,N6-trimethyllysine; alternate mark. Lys-37 carries the N6,N6-dimethyllysine; alternate modification. An N6-acetyllysine modification is found at Lys-57. Lys-80 is subject to N6,N6,N6-trimethyllysine; alternate. The residue at position 80 (Lys-80) is an N6,N6-dimethyllysine; alternate. The residue at position 80 (Lys-80) is an N6-methyllysine; alternate.

This sequence belongs to the histone H3 family. In terms of assembly, the nucleosome is a histone octamer containing two molecules each of H2A, H2B, H3 and H4 assembled in one H3-H4 heterotetramer and two H2A-H2B heterodimers. The octamer wraps approximately 147 bp of DNA. In terms of processing, acetylation is generally linked to gene activation. Different methylation states of H3K4 mark distinct developmental phases. H3K4me2 is associated with euchromatic regions. H3K4me3 is a mark of active chromatin. set1 is responsible for all mono-, di- and tri-methylation of H3K4. H3K4me facilitates subsequent acetylation of H3 and H4. Methylation at H3K9 is linked to gene repression. Post-translationally, H3S10ph, which is linked to gene activation, prevents methylation at H3K9 but facilitates acetylation of H3 and H4.

It localises to the nucleus. The protein localises to the chromosome. Functionally, core component of nucleosome. Nucleosomes wrap and compact DNA into chromatin, limiting DNA accessibility to the cellular machineries which require DNA as a template. Histones thereby play a central role in transcription regulation, DNA repair, DNA replication and chromosomal stability. DNA accessibility is regulated via a complex set of post-translational modifications of histones, also called histone code, and nucleosome remodeling. This Dictyostelium discoideum (Social amoeba) protein is Histone H3.3 type c (H3c).